A 751-amino-acid chain; its full sequence is E3 ubiquitin-protein ligase SMURF2 (751 aa).

The C2 domain maps to 1-119; it reads MSNQGSRRNG…TGYQRLDLCK (119 aa). A WW 1 domain is found at 157 to 190; that stretch reads NDLPDGWEERRTASGRIQYLNHITRTTQWERPTR. Residues 214-226 show a composition bias toward polar residues; it reads GTNGASCGQTSDP. Residues 214–236 form a disordered region; that stretch reads GTNGASCGQTSDPRISERRVRSQ. 2 consecutive WW domains span residues 251-284 and 297-330; these read PDLP…DPRV and GPLP…DPRL. The region spanning 417–751 is the HECT domain; sequence RPKDLWKRLM…IEETCGFAVE (335 aa). The Glycyl thioester intermediate role is filled by cysteine 719.

The protein localises to the nucleus. It localises to the cytoplasm. Its subcellular location is the cell membrane. The protein resides in the membrane raft. It catalyses the reaction S-ubiquitinyl-[E2 ubiquitin-conjugating enzyme]-L-cysteine + [acceptor protein]-L-lysine = [E2 ubiquitin-conjugating enzyme]-L-cysteine + N(6)-ubiquitinyl-[acceptor protein]-L-lysine.. The protein operates within protein modification; protein ubiquitination. E3 ubiquitin-protein ligase which accepts ubiquitin from an E2 ubiquitin-conjugating enzyme in the form of a thioester and then directly transfers the ubiquitin to targeted substrates. In Xenopus laevis (African clawed frog), this protein is E3 ubiquitin-protein ligase SMURF2 (smurf2).